Reading from the N-terminus, the 208-residue chain is Small ribosomal subunit protein uS4 (208 aa).

Positions 98 to 161 (RRLDNVIYRL…KESPRIKELL (64 aa)) constitute an S4 RNA-binding domain.

The protein belongs to the universal ribosomal protein uS4 family. As to quaternary structure, part of the 30S ribosomal subunit. Contacts protein S5. The interaction surface between S4 and S5 is involved in control of translational fidelity.

One of the primary rRNA binding proteins, it binds directly to 16S rRNA where it nucleates assembly of the body of the 30S subunit. Its function is as follows. With S5 and S12 plays an important role in translational accuracy. In Pelotomaculum thermopropionicum (strain DSM 13744 / JCM 10971 / SI), this protein is Small ribosomal subunit protein uS4.